The sequence spans 512 residues: Mesoderm induction early response protein 1 (512 aa).

The span at 1-16 (MAEPSVESSSPGGSAT) shows a compositional bias: low complexity. Disordered regions lie at residues 1–63 (MAEP…REGD) and 75–173 (YGST…EDYI). S10 is modified (phosphoserine). A compositionally biased stretch (basic and acidic residues) spans 17–36 (SDDHEFDPSADMLVHDFDDE). Composition is skewed to acidic residues over residues 37–46 (RTLEEEEMME) and 83–105 (EEDEEEEEEEEEGEDDEDADNDD). A compositionally biased stretch (polar residues) spans 129–144 (QSSNDDPSQSVASQDA). Residue S141 is modified to Phosphoserine. The residue at position 155 (Y155) is a Phosphotyrosine. S160 and S166 each carry phosphoserine. Acidic residues predominate over residues 160 to 173 (SEVEEESEEDEDYI). In terms of domain architecture, ELM2 spans 180-278 (KEIMVGSMFQ…EALRRLRFNV (99 aa)). The interaction with HDAC1 stretch occupies residues 180 to 284 (KEIMVGSMFQ…RFNVKAAREE (105 aa)). Residue K239 forms a Glycyl lysine isopeptide (Lys-Gly) (interchain with G-Cter in SUMO2) linkage. An SANT domain is found at 283–335 (EELSVWTEEECRNFEQGLKAYGKDFHLIQANKVRTRSVGECVAFYYMWKKSER). The interval 366–512 (ESESAASSRA…KFEELENTDD (147 aa)) is disordered. Residues S367, S369, and S377 each carry the phosphoserine modification. Polar residues predominate over residues 396 to 409 (TVSTANQNGVSSNG). The span at 414–423 (LNKEEVKVEG) shows a compositional bias: basic and acidic residues. K420 participates in a covalent cross-link: Glycyl lysine isopeptide (Lys-Gly) (interchain with G-Cter in SUMO2). T448 bears the Phosphothreonine mark. A compositionally biased stretch (basic and acidic residues) spans 462–475 (ARNENDFDEKSERP). Residues 482–494 (NSNGKESPGSSEF) show a composition bias toward polar residues. A phosphoserine mark is found at S483, S488, and S491.

Interacts with HDAC1. Part of a complex containing at least CDYL, MIER1, MIER2, HDAC1 and HDAC2. Ubiquitously expressed, but at very low levels. However, consistent level of expression are observed in heart, testis, thyroid, ovary and adrenal gland. Transcripts are up-regulated in breast carcinoma cell lines and tumor.

The protein localises to the nucleus. It is found in the cytoplasm. In terms of biological role, transcriptional repressor regulating the expression of a number of genes including SP1 target genes. Probably functions through recruitment of HDAC1 a histone deacetylase involved in chromatin silencing. This Homo sapiens (Human) protein is Mesoderm induction early response protein 1 (MIER1).